A 327-amino-acid chain; its full sequence is Aspartate carbamoyltransferase catalytic subunit (327 aa).

Positions 54 and 55 each coordinate carbamoyl phosphate. Lys82 lines the L-aspartate pocket. 3 residues coordinate carbamoyl phosphate: Arg104, His134, and Gln137. Positions 177 and 232 each coordinate L-aspartate. Carbamoyl phosphate-binding residues include Gly280 and Pro281.

It belongs to the aspartate/ornithine carbamoyltransferase superfamily. ATCase family. As to quaternary structure, heterododecamer (2C3:3R2) of six catalytic PyrB chains organized as two trimers (C3), and six regulatory PyrI chains organized as three dimers (R2).

It carries out the reaction carbamoyl phosphate + L-aspartate = N-carbamoyl-L-aspartate + phosphate + H(+). It functions in the pathway pyrimidine metabolism; UMP biosynthesis via de novo pathway; (S)-dihydroorotate from bicarbonate: step 2/3. Its function is as follows. Catalyzes the condensation of carbamoyl phosphate and aspartate to form carbamoyl aspartate and inorganic phosphate, the committed step in the de novo pyrimidine nucleotide biosynthesis pathway. The sequence is that of Aspartate carbamoyltransferase catalytic subunit from Micrococcus luteus (strain ATCC 4698 / DSM 20030 / JCM 1464 / CCM 169 / CCUG 5858 / IAM 1056 / NBRC 3333 / NCIMB 9278 / NCTC 2665 / VKM Ac-2230) (Micrococcus lysodeikticus).